The following is a 438-amino-acid chain: Cytochrome P450 monooxygenase claJ (438 aa).

Cysteine 378 serves as a coordination point for heme.

Belongs to the cytochrome P450 family. Heme is required as a cofactor.

The protein operates within secondary metabolite biosynthesis. In terms of biological role, cytochrome P450 monooxygenase; part of the cla gene cluster that produces clavatol and ortho-quinone methide. The clavatol biosynthesis cluster cla and the terrestric acid cluster tra are both involved in the production of peniphenones and penilactones. The non-reducing PKS claF is responsible for the formation of clavatol from successive condensations of 3 malonyl-CoA units, presumably with a simple acetyl-CoA starter unit, and 2 methylation steps. The esterase claE probably collaborates with claF by catalyzing the hydrolysis of ACP-bound acyl intermediates to free the ACP from stalled intermediates. The clavatol oxidase claD then converts clavatol to hydroxyclavatol. Spontaneous dehydration of hydroxyclavatol leads to the accumulation of the highly active ortho-quinone methide. On the other hand, the PKS-NRPS hybrid traA is involved in the formation of crustosic acid, with the help of traB and traD. The polyketide synthase module (PKS) of traA is responsible for the synthesis of the polyketide backbone via the condensation of an acetyl-CoA starter unit with 3 malonyl-CoA units. The downstream nonribosomal peptide synthetase (NRPS) module then amidates the carboxyl end of the polyketide with L-malic acid. Because traA lacks a designated enoylreductase (ER) domain, the required activity is provided the enoyl reductase traG. Crustosic acid undergoes decarboxylation and isomerization to the terrestric acid, catalyzed by the 2-oxoglutarate-dependent dioxygenase traH. Both acids are further converted to the 2 gamma-butyrolactones (R)-5-methyltetronic acid and (S)-5-carboxylmethyltetronic acid, with involvement of the cytochrome P450 monooxygenase claJ. Spontaneous addition of the methide to these gamma-butyrolactones leads to peniphenone D and penilactone D, which undergo again stereospecific attacking by methide to give penilactones A and B. The chain is Cytochrome P450 monooxygenase claJ from Penicillium crustosum (Blue mold fungus).